A 364-amino-acid chain; its full sequence is Dual-specificity RNA methyltransferase RlmN (364 aa).

Glu91 (proton acceptor) is an active-site residue. The Radical SAM core domain maps to 97 to 333 (ESDRGTLCIS…VTVRKTRGDD (237 aa)). Cys104 and Cys338 are disulfide-bonded. 3 residues coordinate [4Fe-4S] cluster: Cys111, Cys115, and Cys118. S-adenosyl-L-methionine contacts are provided by residues 164–165 (GE), Ser196, 218–220 (SLH), and Asn295. The active-site S-methylcysteine intermediate is Cys338.

This sequence belongs to the radical SAM superfamily. RlmN family. The cofactor is [4Fe-4S] cluster.

It localises to the cytoplasm. The catalysed reaction is adenosine(2503) in 23S rRNA + 2 reduced [2Fe-2S]-[ferredoxin] + 2 S-adenosyl-L-methionine = 2-methyladenosine(2503) in 23S rRNA + 5'-deoxyadenosine + L-methionine + 2 oxidized [2Fe-2S]-[ferredoxin] + S-adenosyl-L-homocysteine. It catalyses the reaction adenosine(37) in tRNA + 2 reduced [2Fe-2S]-[ferredoxin] + 2 S-adenosyl-L-methionine = 2-methyladenosine(37) in tRNA + 5'-deoxyadenosine + L-methionine + 2 oxidized [2Fe-2S]-[ferredoxin] + S-adenosyl-L-homocysteine. Specifically methylates position 2 of adenine 2503 in 23S rRNA and position 2 of adenine 37 in tRNAs. m2A2503 modification seems to play a crucial role in the proofreading step occurring at the peptidyl transferase center and thus would serve to optimize ribosomal fidelity. In Neisseria meningitidis serogroup C / serotype 2a (strain ATCC 700532 / DSM 15464 / FAM18), this protein is Dual-specificity RNA methyltransferase RlmN.